Consider the following 71-residue polypeptide: UPF0337 protein RPA4418 (71 aa).

A disordered region spans residues 1–54; sequence MGSTMDKIKGQANELAGKAKQGIGEATGSDKLKGEGAIQEAKGHGQQALGNAKD.

Belongs to the UPF0337 (CsbD) family.

This is UPF0337 protein RPA4418 from Rhodopseudomonas palustris (strain ATCC BAA-98 / CGA009).